The sequence spans 163 residues: Translation initiation factor IF-3-like (163 aa).

Belongs to the IF-3 family.

The protein is Translation initiation factor IF-3-like of Nostoc sp. (strain PCC 7120 / SAG 25.82 / UTEX 2576).